A 90-amino-acid polypeptide reads, in one-letter code: Putative septation protein SpoVG (90 aa).

The protein belongs to the SpoVG family.

Could be involved in septation. This chain is Putative septation protein SpoVG, found in Clostridium perfringens (strain SM101 / Type A).